Consider the following 37-residue polypeptide: Serrulin (37 aa).

The disordered stretch occupies residues 16-37 (FGGGGIGGGGFGGGYGGGKIKG). Lysine 36 carries the post-translational modification Lysine amide.

As to expression, expressed in hemocytes (at protein level).

It is found in the secreted. Functionally, antimicrobial protein with activity against Gram-positive and Gram-negative bacteria, filamentous fungus, and yeast. Was tested against Micrococcus luteus A270 (MIC=0.5-1 uM), Echerichia coli SBS 363 (MIC=9-16 uM), Pseudomonas aeruginosa (MIC=0.01-0.3 uM), Aspergillus niger (MIC=3-6 uM), and Candida albicans MDM8 (MIC=1.5-3 uM). Has no hemolytic activity against human erythrocytes. The sequence is that of Serrulin from Tityus serrulatus (Brazilian scorpion).